The primary structure comprises 876 residues: Leucine--tRNA ligase (876 aa).

The tract at residues 1–20 is disordered; it reads MATERYNPRDAEPRWQQKWN. The 'HIGH' region signature appears at 43–53; that stretch reads PYPSGRIHMGH. The short motif at 632 to 636 is the 'KMSKS' region element; that stretch reads KMSKS. Lys635 is an ATP binding site.

It belongs to the class-I aminoacyl-tRNA synthetase family.

Its subcellular location is the cytoplasm. The catalysed reaction is tRNA(Leu) + L-leucine + ATP = L-leucyl-tRNA(Leu) + AMP + diphosphate. This chain is Leucine--tRNA ligase, found in Rhizobium leguminosarum bv. trifolii (strain WSM2304).